The sequence spans 514 residues: Cytochrome P450 monooxygenase FUS8 (514 aa).

A helical transmembrane segment spans residues Val24–Val44. Residues Asn225 and Asn443 are each glycosylated (N-linked (GlcNAc...) asparagine). Cys460 lines the heme pocket.

It belongs to the cytochrome P450 family. The cofactor is heme.

It is found in the membrane. Its pathway is mycotoxin biosynthesis. Its function is as follows. Cytochrome P450 monooxygenase; part of the gene cluster that mediates the biosynthesis of the mycotoxin fusarin C. Within the cluster, FUS1, FUS2, FUS8 and FUS9 are sufficient for fusarin production. The roles of the other FUS members are yet undetermined. The fusarin C synthetase FUS1 is responsible for the condensation of one acetyl-coenzyme A (CoA) unit with six malonyl-CoA units and the amide linkage of the arising heptaketide and homoserine, subsequently releasing the first intermediate, prefusarin, as an alcohol with an open ring structure. The cytochrome P450 monooxygenase FUS8 participates in multiple oxidation processes at carbon C-20 and is able to use the FUS1 product as substrate, resulting in formation of 20-hydroxy-prefusarin. This reaction seems to be essential before the 2-pyrrolidone ring closure can be catalyzed by FUS2, generating 20-hydroxy-fusarin. FUS8 is able to further oxidizes carbon C-20 after ring closure, resulting in the formation of carboxy-fusarin C. As the last step, FUS9 methylates the hydroxyl group at C-21 to generate fusarin C. Fusarin C can then rearrange to epi-fusarin C, the (z)-isomers, and fusarin A and fusarin D. In Gibberella fujikuroi (strain CBS 195.34 / IMI 58289 / NRRL A-6831) (Bakanae and foot rot disease fungus), this protein is Cytochrome P450 monooxygenase FUS8.